We begin with the raw amino-acid sequence, 91 residues long: MARNVFCTYLNQEAEGLDFQLYPGELGKRIFDNISKQAWAEWMKKQTMLVNEKKLNMMNSEHRQLLEQEMTNFLFEGKDVHIEGYVPPTEK.

It belongs to the Fe(2+)-trafficking protein family.

Could be a mediator in iron transactions between iron acquisition and iron-requiring processes, such as synthesis and/or repair of Fe-S clusters in biosynthetic enzymes. In Histophilus somni (strain 129Pt) (Haemophilus somnus), this protein is Probable Fe(2+)-trafficking protein.